A 247-amino-acid chain; its full sequence is Proteasome subunit alpha type-7-1 (247 aa).

It belongs to the peptidase T1A family. As to quaternary structure, the 26S proteasome consists of a 20S proteasome core and two 19S regulatory subunits. The 20S proteasome core is composed of 28 subunits that are arranged in four stacked rings, resulting in a barrel-shaped structure. The two end rings are each formed by seven alpha subunits, and the two central rings are each formed by seven beta subunits. The catalytic chamber with the active sites is on the inside of the barrel.

It is found in the cytoplasm. The protein resides in the nucleus. Functionally, the proteasome is a multicatalytic proteinase complex which is characterized by its ability to cleave peptides with Arg, Phe, Tyr, Leu, and Glu adjacent to the leaving group at neutral or slightly basic pH. The proteasome has an ATP-dependent proteolytic activity. This chain is Proteasome subunit alpha type-7-1 (Pros28.1), found in Drosophila virilis (Fruit fly).